The chain runs to 200 residues: Probable molybdenum cofactor guanylyltransferase (200 aa).

GTP contacts are provided by residues 9 to 11 (LAG), lysine 21, aspartate 69, and aspartate 100. Residue aspartate 100 participates in Mg(2+) binding.

It belongs to the MobA family. Mg(2+) is required as a cofactor.

Its subcellular location is the cytoplasm. The enzyme catalyses Mo-molybdopterin + GTP + H(+) = Mo-molybdopterin guanine dinucleotide + diphosphate. In terms of biological role, transfers a GMP moiety from GTP to Mo-molybdopterin (Mo-MPT) cofactor (Moco or molybdenum cofactor) to form Mo-molybdopterin guanine dinucleotide (Mo-MGD) cofactor. The sequence is that of Probable molybdenum cofactor guanylyltransferase from Bacillus cereus (strain G9842).